The chain runs to 359 residues: Phosphatidylglycerol--prolipoprotein diacylglyceryl transferase (359 aa).

The next 4 helical transmembrane spans lie at Val24–Gly44, Val58–Val78, Val98–Ile118, and Gly124–Ile144. Arg146 lines the a 1,2-diacyl-sn-glycero-3-phospho-(1'-sn-glycerol) pocket. The next 3 helical transmembrane spans lie at Phe193–Leu213, Ile222–Glu243, and Val258–Thr278. The segment at Pro284–Asp359 is disordered. Residues Ile306–Gly323 are compositionally biased toward basic and acidic residues. Residues Ala336 to Thr349 are compositionally biased toward low complexity. Over residues Ile350–Asp359 the composition is skewed to basic and acidic residues.

Belongs to the Lgt family.

It localises to the cell membrane. The enzyme catalyses L-cysteinyl-[prolipoprotein] + a 1,2-diacyl-sn-glycero-3-phospho-(1'-sn-glycerol) = an S-1,2-diacyl-sn-glyceryl-L-cysteinyl-[prolipoprotein] + sn-glycerol 1-phosphate + H(+). The protein operates within protein modification; lipoprotein biosynthesis (diacylglyceryl transfer). Its function is as follows. Catalyzes the transfer of the diacylglyceryl group from phosphatidylglycerol to the sulfhydryl group of the N-terminal cysteine of a prolipoprotein, the first step in the formation of mature lipoproteins. This is Phosphatidylglycerol--prolipoprotein diacylglyceryl transferase from Rhodococcus jostii (strain RHA1).